Here is a 71-residue protein sequence, read N- to C-terminus: Conotoxin Bu24 (71 aa).

A signal peptide spans 1-21 (MGMRMMVTVFLLVVLATTVVS). The propeptide occupies 22-44 (LRSNRASDGRRGIVNKLNDLVPK). Asparagine 70 carries the post-translational modification Asparagine amide.

The protein belongs to the conotoxin A superfamily. In terms of processing, contains 3 disulfide bonds. They are not indicated here, since framework IV presents two different connectivities (I-V, II-III, IV-VI and I-III, II-V, IV-VI). In terms of tissue distribution, expressed by the venom duct.

The protein resides in the secreted. The polypeptide is Conotoxin Bu24 (Conus bullatus (Bubble cone)).